A 115-amino-acid polypeptide reads, in one-letter code: Ribonuclease P protein component (115 aa).

This sequence belongs to the RnpA family. As to quaternary structure, consists of a catalytic RNA component (M1 or rnpB) and a protein subunit.

It carries out the reaction Endonucleolytic cleavage of RNA, removing 5'-extranucleotides from tRNA precursor.. In terms of biological role, RNaseP catalyzes the removal of the 5'-leader sequence from pre-tRNA to produce the mature 5'-terminus. It can also cleave other RNA substrates such as 4.5S RNA. The protein component plays an auxiliary but essential role in vivo by binding to the 5'-leader sequence and broadening the substrate specificity of the ribozyme. This chain is Ribonuclease P protein component, found in Baumannia cicadellinicola subsp. Homalodisca coagulata.